Reading from the N-terminus, the 299-residue chain is T-lymphocyte activation antigen CD80 (299 aa).

A signal peptide spans 1 to 32 (MGHTLRPGTPLPRCLHLKLCLLLALAGLHFSS). The Ig-like V-type domain maps to 33 to 131 (GISQVTKSVK…NGSFRREHLT (99 aa)). Residues 33–243 (GISQVTKSVK…KQEPPIDQLP (211 aa)) are Extracellular-facing. A disulfide bridge links Cys49 with Cys115. N-linked (GlcNAc...) asparagine glycosylation is found at Asn52, Asn88, Asn97, Asn122, Asn185, Asn206, and Asn210. Positions 144–225 (PSITDIGHPD…LIKYGELSVS (82 aa)) constitute an Ig-like C2-type domain. Cys161 and Cys215 are oxidised to a cystine. A helical transmembrane segment spans residues 244–264 (FWVIIPVSGALVLTAVVLYCL). At 265 to 299 (ACRHVARWKRTRRNEETVGTERLSPIYLGSAQSSG) the chain is on the cytoplasmic side.

As to quaternary structure, homodimer. Interacts with CTLA4; this interaction inhibits T-cell activation. Interacts with PDL1/CD274; this interaction blocks PDL1/PDCD1 binding and thus PDL1/CD274 inhibitory function. Interacts with CD28.

The protein localises to the cell membrane. Its function is as follows. Costimulatory molecule that belongs to the immunoglobulin superfamily that plays an important role in T-lymphocyte activation. Acts as the primary auxiliary signal augmenting the MHC/TCR signal in naive T-cells together with the CD28 receptor which is constitutively expressed on the cell surface of T-cells. In turn, activates different signaling pathways such as NF-kappa-B or MAPK leading to the production of different cytokines. In addition, CD28/CD80 costimulatory signal stimulates glucose metabolism and ATP synthesis of T-cells by activating the PI3K/Akt signaling pathway. Also acts as a regulator of PDL1/PDCD1 interactions to limit excess engagement of PDL1 and its inhibitory role in immune responses. Expressed on B-cells, plays a critical role in regulating interactions between B-cells and T-cells in both early and late germinal center responses, which are crucial for the generation of effective humoral immune responses. The sequence is that of T-lymphocyte activation antigen CD80 (CD80) from Oryctolagus cuniculus (Rabbit).